Here is a 241-residue protein sequence, read N- to C-terminus: Small ribosomal subunit protein uS10m (241 aa).

A mitochondrion-targeting transit peptide spans 1–54 (MIAGVLRRSSLPSRQTLSAALASFNSCISHNLTPATTGASVSSRFTLASSPNSF).

This sequence belongs to the universal ribosomal protein uS10 family. As to quaternary structure, component of the mitochondrial ribosome small subunit.

The protein resides in the mitochondrion. The sequence is that of Small ribosomal subunit protein uS10m (RPS10) from Arabidopsis thaliana (Mouse-ear cress).